A 582-amino-acid chain; its full sequence is MEPPTSHVTNAFSDSDSASVEEGDADADADVEALRRLSDNLAAAFRSPEDFAFLADARIAVPGGGGGGGDLRVHRCVLSARSPFLRGVFARRAAAAAGGGGEDGSERLELRELLGGGGEEVEVGYEALRLVLDYLYSGRVGDLPKAACLCVDEDCAHVGCHPAVAFMAQVLFAASTFQVAELTNLFQRRLLDVLDKVEVDNLLLILSVANLCNKSCMKLLERCLDMVVRSNLDMITLEKSLPPDVIKQIIDARLSLGLISPENKGFPNKHVRRIHRALDSDDVELVRMLLTEGQTNLDDAFALHYAVEHCDSKITTELLDLALADVNHRNPRGYTVLHIAARRREPKIIVSLLTKGARPADVTFDGRKAVQISKRLTKQGDYFGVTEEGKPSPKDRLCIEILEQAERRDPQLGEASVSLAMAGESLRGRLLYLENRVALARIMFPMEARVAMDIAQVDGTLEFNLGSGANPPPERQRTTVDLNESPFIMKEEHLARMTALSKTVELGKRFFPRCSNVLDKIMDDETDPVSLGRDTSAEKRKRFHDLQDVLQKAFHEDKEENDRSGLSSSSSSTSIGAIRPRR.

The segment covering 1-12 (MEPPTSHVTNAF) has biased composition (polar residues). Residues 1–27 (MEPPTSHVTNAFSDSDSASVEEGDADA) are disordered. One can recognise a BTB domain in the interval 55–140 (ADARIAVPGG…VLDYLYSGRV (86 aa)). The segment at 147-161 (ACLCVDEDCAHVGCH) adopts a C2HC NPR-type zinc-finger fold. Zn(2+)-binding residues include cysteine 150, cysteine 155, histidine 157, and cysteine 160. 4 ANK repeats span residues 229-258 (RSNL…SLGL), 269-299 (KHVR…NLDD), 301-328 (FALH…DVNH), and 332-361 (RGYT…RPAD). The tract at residues 391–526 (PSPKDRLCIE…VLDKIMDDET (136 aa)) is salicylic acid-binding core (SBC). Arginine 436 serves as a coordination point for salicylate. 2 disordered regions span residues 525–544 (ETDP…KRFH) and 551–582 (QKAF…RPRR). Over residues 553 to 563 (AFHEDKEENDR) the composition is skewed to basic and acidic residues. Over residues 564–574 (SGLSSSSSSTS) the composition is skewed to low complexity.

This sequence belongs to the plant 'ANKYRIN-BTB/POZ' family. 'NPR1-like' subfamily. As to quaternary structure, oligomer in an uninduced state; disulfide-linked. Forms activated monomer upon changes in cellular redox potential. Interacts with TGA2.2. Interacts with NRR.

The protein resides in the cytoplasm. The protein localises to the nucleus. It localises to the nuclear body. It functions in the pathway protein modification; protein ubiquitination. Functionally, salicylic acid (SA)-binding substrate-specific adapter of an E3 ubiquitin-protein ligase complex (CUL3-RBX1-BTB) which mediates the ubiquitination and subsequent proteasomal degradation of target proteins. Transcription cofactor that represses gene expression in the absence of salicylic acid (SA), when attached to negative cis-elements (W-box) with WRKY transcription factors, but stimulates gene expression upon activation by SA, when sumoylated and attached to positive cis-elements (as-1) with TGA transcription factors, thus confering immunity through a series of gene regulations ending in a significant increase in antimicrobial and defense genes expression. Key positive factor of disease resistance. Involved in defense response against the bacterial blight disease caused by Xanthomonas oryzae pv. oryzae (Xoo). Plants over-expressing NPR1/NH1 acquire high levels of resistance to Xoo, express constitutively defense genes and develop lesion-mimic spots on leaves at pre-flowering stage. Involved in basal resistance to the blast pathogen Magnaporthe oryzae. Plants over-expressing NPR1/NH1 have increased resistance to M.oryzae infection. Plays an essential role in benzothiadiazole (BTH)-induced resistance to the blast fungus disease caused by Magnaporthe oryzae. Functions as a transcriptional coactivator of TGA2.1 and LG2 in vitro. Involved in defense response against herbivore. Plants silencing NPR1/NH1 have increased herbivore-induced trypsin proteinase inhibitors and volatiles, which reduces the performance of the striped stem borer (SSB) Chilo suppressalis. The chain is BTB/POZ domain and ankyrin repeat-containing protein NPR1 from Oryza sativa subsp. indica (Rice).